Here is a 248-residue protein sequence, read N- to C-terminus: Triosephosphate isomerase (248 aa).

A substrate-binding site is contributed by N9–K11. The Electrophile role is filled by H94. E164 (proton acceptor) is an active-site residue. Substrate contacts are provided by residues G170, S209, and G230–G231.

It belongs to the triosephosphate isomerase family. In terms of assembly, homodimer.

It is found in the cytoplasm. The enzyme catalyses D-glyceraldehyde 3-phosphate = dihydroxyacetone phosphate. The protein operates within carbohydrate biosynthesis; gluconeogenesis. It participates in carbohydrate degradation; glycolysis; D-glyceraldehyde 3-phosphate from glycerone phosphate: step 1/1. Its function is as follows. Involved in the gluconeogenesis. Catalyzes stereospecifically the conversion of dihydroxyacetone phosphate (DHAP) to D-glyceraldehyde-3-phosphate (G3P). This Hahella chejuensis (strain KCTC 2396) protein is Triosephosphate isomerase.